The chain runs to 430 residues: Serine--tRNA ligase (430 aa).

234–236 serves as a coordination point for L-serine; the sequence is TAE. 265–267 serves as a coordination point for ATP; that stretch reads RRE. Glu288 is an L-serine binding site. ATP is bound at residue 352–355; the sequence is EISS. Ser388 serves as a coordination point for L-serine.

The protein belongs to the class-II aminoacyl-tRNA synthetase family. Type-1 seryl-tRNA synthetase subfamily. In terms of assembly, homodimer. The tRNA molecule binds across the dimer.

Its subcellular location is the cytoplasm. It catalyses the reaction tRNA(Ser) + L-serine + ATP = L-seryl-tRNA(Ser) + AMP + diphosphate + H(+). It carries out the reaction tRNA(Sec) + L-serine + ATP = L-seryl-tRNA(Sec) + AMP + diphosphate + H(+). It participates in aminoacyl-tRNA biosynthesis; selenocysteinyl-tRNA(Sec) biosynthesis; L-seryl-tRNA(Sec) from L-serine and tRNA(Sec): step 1/1. Functionally, catalyzes the attachment of serine to tRNA(Ser). Is also able to aminoacylate tRNA(Sec) with serine, to form the misacylated tRNA L-seryl-tRNA(Sec), which will be further converted into selenocysteinyl-tRNA(Sec). The protein is Serine--tRNA ligase of Thermosynechococcus vestitus (strain NIES-2133 / IAM M-273 / BP-1).